The primary structure comprises 197 residues: Tyrosine-protein phosphatase-like protein OCA2 (197 aa).

In terms of domain architecture, Tyrosine-protein phosphatase spans 10 to 160; sequence SPVVSTDVSL…FETNLKIPRN (151 aa). The residue at position 181 (Ser181) is a Phosphoserine.

This sequence belongs to the protein-tyrosine phosphatase family.

The protein resides in the cytoplasm. Functionally, required for normal growth in the presence of linoleic acid hydroperoxide (LoaOOH). The protein is Tyrosine-protein phosphatase-like protein OCA2 (OCA2) of Saccharomyces cerevisiae (strain ATCC 204508 / S288c) (Baker's yeast).